We begin with the raw amino-acid sequence, 400 residues long: Ribosomal RNA large subunit methyltransferase I (400 aa).

Positions 6–84 constitute a PUA domain; the sequence is FPRLVLAKGR…NEAIDSAFFE (79 aa).

Belongs to the methyltransferase superfamily. RlmI family.

The protein resides in the cytoplasm. It catalyses the reaction cytidine(1962) in 23S rRNA + S-adenosyl-L-methionine = 5-methylcytidine(1962) in 23S rRNA + S-adenosyl-L-homocysteine + H(+). Specifically methylates the cytosine at position 1962 (m5C1962) of 23S rRNA. This is Ribosomal RNA large subunit methyltransferase I from Klebsiella pneumoniae subsp. pneumoniae (strain ATCC 700721 / MGH 78578).